The chain runs to 300 residues: B1 kinase (300 aa).

Residues Trp16 to Phe282 form the Protein kinase domain. ATP is bound by residues Ile22–Ile30 and Lys45. Asp147 acts as the Proton acceptor in catalysis.

This sequence belongs to the protein kinase superfamily. Ser/Thr protein kinase family. Poxviruses subfamily. As to quaternary structure, interacts with host JIP1; this interaction increases the amount of MAPK bound to JIP1 and subsequently increases the activity of transcription factors, such as JUN, that respond to these complexes. Interacts with protein OPG198; this interaction inhibits the repressive activity of OPG198 pseudokinase on viral replication factory formation. Requires Mg(2+) as cofactor. In terms of processing, autophosphorylated.

The protein localises to the virion. The protein resides in the host cytoplasm. It catalyses the reaction L-seryl-[protein] + ATP = O-phospho-L-seryl-[protein] + ADP + H(+). The enzyme catalyses L-threonyl-[protein] + ATP = O-phospho-L-threonyl-[protein] + ADP + H(+). Essential serine/threonine-protein kinase that plays different role in the viral life cycle. Phosphorylates the host small ribosomal protein RACK1 thereby customizing the ribosomes to a state optimal for viral mRNAs (which contain poly-A leaders) but not for host mRNAs. Facilitates viral DNA replication by inhibiting host BANF1, a cellular host defense responsive to foreign DNA. Phosphorylates host BANF1 on serine and threonine residues; this leads to BANF1 relocalization to the cytoplasm, loss of dimerization and impaired DNA binding activity. Indeed, BANF1 activity depends on its DNA-binding property which is blocked by VPK1-mediated phosphorylation. Required for viral intermediate genes expression, probably by inhibiting host BANF1. Modulates cellular responses via host JUN by two different mechanisms, either by direct phosphorylation or by modulation of upstream JIP1-MAPK complexes. Seems to participate in the accumulation/processing of late proteins and thus in virion maturation. In addition, inhibits B12 repressive activity on viral DNA replication via a phosphorylation-dependent mechanism. The protein is B1 kinase (OPG187) of Homo sapiens (Human).